Reading from the N-terminus, the 1187-residue chain is uncharacterized protein (1187 aa).

The span at 38-57 (KNNQDIPTSNTNISPKPISQ) shows a compositional bias: polar residues. Disordered stretches follow at residues 38–127 (KNNQ…NSPT), 189–215 (ISRSSSSSSSSSSSSSGKSNENSIHLN), 248–287 (TQPPQPYPQQIQPPQEQLQQHQSQAPHSPLPQPQPPSQLQ), 358–415 (NNNS…NSNS), 443–490 (FPNN…INNN), 536–689 (QFPF…SSLN), 752–840 (SINN…NKSI), and 1079–1187 (HNNN…NLQK). Composition is skewed to low complexity over residues 71-84 (KPIVPSTSSTSTLI), 104-124 (PSSSSSSSSSSLSSSSTSIPN), 190-215 (SRSSSSSSSSSSSSSGKSNENSIHLN), and 248-274 (TQPPQPYPQQIQPPQEQLQQHQSQAPH). The span at 443–455 (FPNNTDENYPSDH) shows a compositional bias: polar residues. Composition is skewed to low complexity over residues 458–490 (NDNNNDKNNNTNNNIIINDDNNNNPNNNNINNN), 543–570 (TTESGFSSTSTTPSSTSVPSSLSNSSSA), 585–653 (INNL…SNIN), 662–689 (PNSPISNYSSMSSSSSPNSFTSSTSSLN), 752–790 (SINNNNNNDKNNDIDNSNENLTTTTTTTTTTTTTTTTNN), and 797–809 (NYKINNYNNNIDN). Acidic residues predominate over residues 815-832 (NDDDNDDDDDDDVDDNDD). 2 stretches are compositionally biased toward low complexity: residues 1079–1149 (HNNN…PSNN) and 1156–1174 (KNNNNNNNNNNNNNNNNTN).

This is an uncharacterized protein from Dictyostelium discoideum (Social amoeba).